Consider the following 444-residue polypeptide: MGKGGNQGEGAAEREVSVPTFSWEEIQKHNLRTDRWLVIDRKVYNITKWSIQHPGGQRVIGHYAGEDATDAFRAFHPDLEFVGKFLKPLLIGELAPEEPSQDHGKNSKITEDFRALRKTAEDMNLFKTNHVFFLLLLAHIIALESIAWFTVFYFGNGWIPTLITAFVLATSQAQAGWLQHDYGHLSVYRKPKWNHLVHKFVIGHLKGASANWWNHRHFQHHAKPNIFHKDPDVNMLHVFVLGEWQPIEYGKKKLKYLPYNHQHEYFFLIGPPLLIPMYFQYQIIMTMIVHKNWVDLAWAVSYYIRFFITYIPFYGILGALLFLNFIRFLESHWFVWVTQMNHIVMEIDQEAYRDWFSSQLTATCNVEQSFFNDWFSGHLNFQIEHHLFPTMPRHNLHKIAPLVKSLCAKHGIEYQEKPLLRALLDIIRSLKKSGKLWLDAYLHK.

Over 1 to 131 the chain is Cytoplasmic; that stretch reads MGKGGNQGEG…DMNLFKTNHV (131 aa). The Cytochrome b5 heme-binding domain maps to 18–95; sequence VPTFSWEEIQ…LKPLLIGELA (78 aa). The helical transmembrane segment at 132 to 152 threads the bilayer; the sequence is FFLLLLAHIIALESIAWFTVF. At 153–157 the chain is on the lumenal side; that stretch reads YFGNG. A helical transmembrane segment spans residues 158–178; it reads WIPTLITAFVLATSQAQAGWL. At 179–264 the chain is on the cytoplasmic side; sequence QHDYGHLSVY…KYLPYNHQHE (86 aa). The Histidine box-1 motif lies at 180–184; the sequence is HDYGH. Residues 217 to 221 carry the Histidine box-2 motif; it reads HFQHH. The helical transmembrane segment at 265 to 285 threads the bilayer; the sequence is YFFLIGPPLLIPMYFQYQIIM. Over 286 to 305 the chain is Lumenal; that stretch reads TMIVHKNWVDLAWAVSYYIR. A helical membrane pass occupies residues 306–326; sequence FFITYIPFYGILGALLFLNFI. The Cytoplasmic portion of the chain corresponds to 327 to 444; that stretch reads RFLESHWFVW…KLWLDAYLHK (118 aa). Residues 382-386 carry the Histidine box-3 motif; the sequence is QIEHH.

Belongs to the fatty acid desaturase type 1 family. As to expression, expressed in a wide array of tissues, highest expression is found in liver followed by brain, lung, heart, and retina. A lower level is found in breast tumor when compared with normal tissues; lowest levels were found in patients with poor prognostic index.

It localises to the endoplasmic reticulum membrane. It carries out the reaction (9Z,12Z)-octadecadienoyl-CoA + 2 Fe(II)-[cytochrome b5] + O2 + 2 H(+) = (6Z,9Z,12Z)-octadecatrienoyl-CoA + 2 Fe(III)-[cytochrome b5] + 2 H2O. It catalyses the reaction (9Z,12Z,15Z)-octadecatrienoyl-CoA + 2 Fe(II)-[cytochrome b5] + O2 + 2 H(+) = (6Z,9Z,12Z,15Z)-octadecatetraenoyl-CoA + 2 Fe(III)-[cytochrome b5] + 2 H2O. The catalysed reaction is hexadecanoyl-CoA + 2 Fe(II)-[cytochrome b5] + O2 + 2 H(+) = (6Z)-hexadecenoyl-CoA + 2 Fe(III)-[cytochrome b5] + 2 H2O. The enzyme catalyses (9Z,12Z,15Z,18Z,21Z)-tetracosapentaenoyl-CoA + 2 Fe(II)-[cytochrome b5] + O2 + 2 H(+) = (6Z,9Z,12Z,15Z,18Z,21Z)-tetracosahexaenoyl-CoA + 2 Fe(III)-[cytochrome b5] + 2 H2O. It carries out the reaction (11E)-octadecenoyl-CoA + 2 Fe(II)-[cytochrome b5] + O2 + 2 H(+) = (6Z,11E)-octadecadienoyl-CoA + 2 Fe(III)-[cytochrome b5] + 2 H2O. It catalyses the reaction (11Z,14Z)-eicosadienoyl-CoA + 2 Fe(II)-[cytochrome b5] + O2 + 2 H(+) = (8Z,11Z,14Z)-eicosatrienoyl-CoA + 2 Fe(III)-[cytochrome b5] + 2 H2O. The catalysed reaction is (11Z,14Z,17Z)-eicosatrienoyl-CoA + 2 Fe(II)-[cytochrome b5] + O2 + 2 H(+) = (8Z,11Z,14Z,17Z)-eicosatetraenoyl-CoA + 2 Fe(III)-[cytochrome b5] + 2 H2O. It functions in the pathway lipid metabolism; polyunsaturated fatty acid biosynthesis. Involved in the biosynthesis of highly unsaturated fatty acids (HUFA) from the essential polyunsaturated fatty acids (PUFA) linoleic acid (LA) (18:2n-6) and alpha-linolenic acid (ALA) (18:3n-3) precursors, acting as a fatty acyl-coenzyme A (CoA) desaturase that introduces a cis double bond at carbon 6 of the fatty acyl chain. Catalyzes the first and rate limiting step in this pathway which is the desaturation of LA (18:2n-6) and ALA (18:3n-3) into gamma-linoleate (GLA) (18:3n-6) and stearidonate (18:4n-3), respectively. Subsequently, in the biosynthetic pathway of HUFA n-3 series, it desaturates tetracosapentaenoate (24:5n-3) to tetracosahexaenoate (24:6n-3), which is then converted to docosahexaenoate (DHA)(22:6n-3), an important lipid for nervous system function. Desaturates hexadecanate (palmitate) to produce 6Z-hexadecenoate (sapienate), a fatty acid unique to humans and major component of human sebum, that has been implicated in the development of acne and may have potent antibacterial activity. It can also desaturate (11E)-octadecenoate (trans-vaccenoate, the predominant trans fatty acid in human milk) at carbon 6 generating (6Z,11E)-octadecadienoate. In addition to Delta-6 activity, this enzyme exhibits Delta-8 activity with slight biases toward n-3 fatty acyl-CoA substrates. The polypeptide is Acyl-CoA 6-desaturase (Homo sapiens (Human)).